Reading from the N-terminus, the 499-residue chain is Taxadiene 5-alpha hydroxylase (499 aa).

Residues 22 to 42 (TESFSIALSAIAGILLLLLLF) traverse the membrane as a helical; Signal-anchor segment. Cys445 lines the heme pocket.

The protein belongs to the cytochrome P450 family. It depends on heme as a cofactor.

The protein localises to the membrane. The enzyme catalyses taxa-4(5),11(12)-diene + reduced [NADPH--hemoprotein reductase] + O2 = taxa-4(20),11-dien-5alpha-ol + oxidized [NADPH--hemoprotein reductase] + H2O + H(+). Its pathway is alkaloid biosynthesis; taxol biosynthesis; taxa-4(20),11-dien-5alpha-ol from geranylgeranyl diphosphate: step 2/2. Catalyzes the first oxygenation step of taxol biosynthesis. Can use both taxa-4(5),11(12)-diene and taxa-4(20),11(12)-diene as substrate. This Taxus cuspidata (Japanese yew) protein is Taxadiene 5-alpha hydroxylase.